Consider the following 136-residue polypeptide: MTERTLVLIKPDGVQRQLVGEIIGRIERKGLTLVALELRHVSQDLAAQHYAEHEGKPFFASLLEFITSGPVVAAIVEGPRAIAAFRQLAGGTDPVEKAIPGTIRGDFGLETQFNLVHGSDSVESAKREIGLWFPDA.

6 residues coordinate ATP: Lys-10, Phe-58, Arg-86, Thr-92, Arg-104, and Asn-114. Catalysis depends on His-117, which acts as the Pros-phosphohistidine intermediate.

This sequence belongs to the NDK family. As to quaternary structure, homotetramer. Mg(2+) is required as a cofactor.

It localises to the cytoplasm. It catalyses the reaction a 2'-deoxyribonucleoside 5'-diphosphate + ATP = a 2'-deoxyribonucleoside 5'-triphosphate + ADP. It carries out the reaction a ribonucleoside 5'-diphosphate + ATP = a ribonucleoside 5'-triphosphate + ADP. In terms of biological role, major role in the synthesis of nucleoside triphosphates other than ATP. The ATP gamma phosphate is transferred to the NDP beta phosphate via a ping-pong mechanism, using a phosphorylated active-site intermediate. In Mycolicibacterium paratuberculosis (strain ATCC BAA-968 / K-10) (Mycobacterium paratuberculosis), this protein is Nucleoside diphosphate kinase.